The chain runs to 372 residues: Tribbles homolog 1 (372 aa).

2 disordered regions span residues 1-23 (MRVG…ALLF) and 52-86 (ECSS…GSAP). Positions 59–75 (YLSPPGSPCSPQPPPAA) are enriched in pro residues. A Protein kinase domain is found at 91-338 (IADYLLLPLA…APEILLHPWF (248 aa)). Residues 355–360 (DQIVPE) carry the COP1-binding motif.

It belongs to the protein kinase superfamily. CAMK Ser/Thr protein kinase family. Tribbles subfamily. As to quaternary structure, monomer. Interacts (via protein kinase domain) with CEBPA. Interacts with COP1. As to expression, expressed in most human tissues with the highest levels in skeletal muscle, thyroid gland, pancreas, peripheral blood leukocytes, and bone marrow.

In terms of biological role, adapter protein involved in protein degradation by interacting with COP1 ubiquitin ligase. The COP1-binding motif is masked by autoinhibitory interactions with the protein kinase domain. Serves to alter COP1 substrate specificity by directing the activity of COP1 toward CEBPA. Binds selectively the recognition sequence of CEBPA. Regulates myeloid cell differentiation by altering the expression of CEBPA in a COP1-dependent manner. Controls macrophage, eosinophil and neutrophil differentiation via the COP1-binding domain. Interacts with MAPK kinases and regulates activation of MAP kinases, but has no kinase activity. The protein is Tribbles homolog 1 of Homo sapiens (Human).